Consider the following 375-residue polypeptide: Chaperone protein DnaJ (375 aa).

In terms of domain architecture, J spans 5-70; the sequence is DYYEVLGVER…SKRAAFDQYG (66 aa). A CR-type zinc finger spans residues 134 to 212; the sequence is GTTVSIRVPT…CHGEGRVEEY (79 aa). Zn(2+) contacts are provided by cysteine 147, cysteine 150, cysteine 164, cysteine 167, cysteine 186, cysteine 189, cysteine 200, and cysteine 203. CXXCXGXG motif repeat units lie at residues 147–154, 164–171, 186–193, and 200–207; these read CQPCDGSG, CPTCGGIG, CPRCHGQG, and CTSCHGEG.

The protein belongs to the DnaJ family. In terms of assembly, homodimer. Zn(2+) is required as a cofactor.

The protein localises to the cytoplasm. Functionally, participates actively in the response to hyperosmotic and heat shock by preventing the aggregation of stress-denatured proteins and by disaggregating proteins, also in an autonomous, DnaK-independent fashion. Unfolded proteins bind initially to DnaJ; upon interaction with the DnaJ-bound protein, DnaK hydrolyzes its bound ATP, resulting in the formation of a stable complex. GrpE releases ADP from DnaK; ATP binding to DnaK triggers the release of the substrate protein, thus completing the reaction cycle. Several rounds of ATP-dependent interactions between DnaJ, DnaK and GrpE are required for fully efficient folding. Also involved, together with DnaK and GrpE, in the DNA replication of plasmids through activation of initiation proteins. This is Chaperone protein DnaJ from Pseudomonas putida (strain ATCC 47054 / DSM 6125 / CFBP 8728 / NCIMB 11950 / KT2440).